The sequence spans 89 residues: Small ribosomal subunit protein uS19 (89 aa).

It belongs to the universal ribosomal protein uS19 family.

Functionally, protein S19 forms a complex with S13 that binds strongly to the 16S ribosomal RNA. The protein is Small ribosomal subunit protein uS19 of Stenotrophomonas maltophilia (strain R551-3).